The primary structure comprises 139 residues: SPbeta prophage-derived uncharacterized protein YomN (139 aa).

The polypeptide is SPbeta prophage-derived uncharacterized protein YomN (yomN) (Bacillus subtilis (strain 168)).